A 365-amino-acid chain; its full sequence is Histidinol-phosphate aminotransferase (365 aa).

K222 is subject to N6-(pyridoxal phosphate)lysine.

The protein belongs to the class-II pyridoxal-phosphate-dependent aminotransferase family. Histidinol-phosphate aminotransferase subfamily. As to quaternary structure, homodimer. The cofactor is pyridoxal 5'-phosphate.

The catalysed reaction is L-histidinol phosphate + 2-oxoglutarate = 3-(imidazol-4-yl)-2-oxopropyl phosphate + L-glutamate. Its pathway is amino-acid biosynthesis; L-histidine biosynthesis; L-histidine from 5-phospho-alpha-D-ribose 1-diphosphate: step 7/9. The polypeptide is Histidinol-phosphate aminotransferase (Geobacillus thermodenitrificans (strain NG80-2)).